A 97-amino-acid chain; its full sequence is MNLAVQDVVKRPLITEKAERAREANRQYAFEVHRDATKIQVKQAVEKLFNVHVLDVRTAIARGKNKRVGRNVGRRPNWKKAYVTLKEGDTIALFEGT.

The protein belongs to the universal ribosomal protein uL23 family. In terms of assembly, part of the 50S ribosomal subunit. Contacts protein L29, and trigger factor when it is bound to the ribosome.

In terms of biological role, one of the early assembly proteins it binds 23S rRNA. One of the proteins that surrounds the polypeptide exit tunnel on the outside of the ribosome. Forms the main docking site for trigger factor binding to the ribosome. The protein is Large ribosomal subunit protein uL23 of Anaeromyxobacter dehalogenans (strain 2CP-1 / ATCC BAA-258).